Reading from the N-terminus, the 511-residue chain is GMP synthase [glutamine-hydrolyzing] (511 aa).

Residues Ile-5–Asp-195 enclose the Glutamine amidotransferase type-1 domain. Cys-82 serves as the catalytic Nucleophile. Active-site residues include His-169 and Glu-171. One can recognise a GMPS ATP-PPase domain in the interval Trp-196–Arg-386. Residue Ser-223 to Ser-229 participates in ATP binding.

As to quaternary structure, homodimer.

The catalysed reaction is XMP + L-glutamine + ATP + H2O = GMP + L-glutamate + AMP + diphosphate + 2 H(+). It participates in purine metabolism; GMP biosynthesis; GMP from XMP (L-Gln route): step 1/1. Its function is as follows. Catalyzes the synthesis of GMP from XMP. This Caldicellulosiruptor saccharolyticus (strain ATCC 43494 / DSM 8903 / Tp8T 6331) protein is GMP synthase [glutamine-hydrolyzing].